A 261-amino-acid polypeptide reads, in one-letter code: MLLAWVRTILVSNMLLAEAYGSGGCFWDNGHLYRADQPSPAPGHSCLNWLDAQSGLAFAPESGAGNHSYCRNPDQDPRGPWCYVSGEAGAPEKRPCQDLRCPDTTSQGLPTSATETEEAAEVPGGDEVFAPANALPARSEAAAVQPVIGISQRVRVNSKEKKDLGTLGYVLGITMMVIIVVIGAGIVLGYTYKRGKDLKAQHEQKVCERELQRITLPLSAFTNPTCEIVDEKTVVVHASQTPVDLQEGSAPLMGQAGTPGA.

The first 21 residues, 1–21 (MLLAWVRTILVSNMLLAEAYG), serve as a signal peptide directing secretion. The Extracellular segment spans residues 22–166 (SGGCFWDNGH…NSKEKKDLGT (145 aa)). The Kringle domain maps to 24–101 (GCFWDNGHLY…EKRPCQDLRC (78 aa)). Intrachain disulfides connect C25-C101, C46-C82, and C70-C96. Basic and acidic residues predominate over residues 90 to 101 (APEKRPCQDLRC). The tract at residues 90–122 (APEKRPCQDLRCPDTTSQGLPTSATETEEAAEV) is disordered. A helical membrane pass occupies residues 167–187 (LGYVLGITMMVIIVVIGAGIV). The Cytoplasmic segment spans residues 188–261 (LGYTYKRGKD…LMGQAGTPGA (74 aa)).

It is found in the cell membrane. Its function is as follows. Negative regulator of hepatic phosphatidylinositol 3-kinase (PI3K) activity. This is Phosphoinositide-3-kinase-interacting protein 1 (PIK3IP1) from Bos taurus (Bovine).